The primary structure comprises 25 residues: Neuromedin-U-25 (25 aa).

Asn25 bears the Asparagine amide mark.

It belongs to the NmU family.

It localises to the secreted. Functionally, stimulates uterine smooth muscle contraction and causes selective vasoconstriction. This is Neuromedin-U-25 (NMU) from Sus scrofa (Pig).